A 461-amino-acid chain; its full sequence is Ribulose bisphosphate carboxylase (461 aa).

Position 112 (Asn-112) interacts with substrate. The active-site Proton acceptor is the Lys-167. Lys-169 contributes to the substrate binding site. 3 residues coordinate Mg(2+): Lys-192, Asp-194, and Glu-195. An N6-carboxylysine modification is found at Lys-192. His-288 (proton acceptor) is an active-site residue. Substrate-binding residues include Arg-289, His-322, and Ser-369.

It belongs to the RuBisCO large chain family. Type II subfamily. Homodimer. The cofactor is Mg(2+).

It carries out the reaction 2 (2R)-3-phosphoglycerate + 2 H(+) = D-ribulose 1,5-bisphosphate + CO2 + H2O. The enzyme catalyses D-ribulose 1,5-bisphosphate + O2 = 2-phosphoglycolate + (2R)-3-phosphoglycerate + 2 H(+). RuBisCO catalyzes two reactions: the carboxylation of D-ribulose 1,5-bisphosphate, the primary event in carbon dioxide fixation, as well as the oxidative fragmentation of the pentose substrate. Both reactions occur simultaneously and in competition at the same active site. This chain is Ribulose bisphosphate carboxylase, found in Rhodopseudomonas palustris (strain HaA2).